Consider the following 492-residue polypeptide: MQNAPMTALLPDALVMAAIVVAWLIDTFVGPNSRRTTYFIALLSTVVAGIWFAIDALTPGAGPQYFFSRMYVVDPFASVMKAVVSLGYAVSIVYSRKYLEDRGLYEGNFFLLGMFSLLGQLVMISGNNFLTLYLGLELMSLSLYAAIALRRENAPSTEAAMKYYVLGALASGFLLYGISMLYGATGSLELNEVLKAVASGRINDVVLLFGVIFIVAGVAFKMGAVPFHMWVPDVYQGAPTAMTLIVGGGPKVAAFAWGLRFLVMGLLPLAVDWQEMLVILAALSLIVGNITGIVQRNVKRMLAYSAISNMGFVLLGLLAGVVDGKTGAAASAYGSAMFYSIVYLITTLGSFGVVMLLARREFEAETLDDFKGLNQRSPVFAFVMMVMMFSLAGIPPAVGFYAKLAVLEATMNAGLTWLAVLAVITSLFGAFYYLRIVKLMYFDDPVDTTPIVGDACKRTLLALNGVAVLVLGIVPGPLMSICLNAISHTLPL.

14 consecutive transmembrane segments (helical) span residues 5–25 (PMTA…AWLI), 37–57 (TYFI…IDAL), 72–92 (VVDP…AVSI), 104–124 (LYEG…LVMI), 129–149 (FLTL…AIAL), 164–184 (YVLG…LYGA), 205–225 (VVLL…MGAV), 239–259 (PTAM…AWGL), 276–295 (MLVI…GIVQ), 302–322 (LAYS…AGVV), 337–357 (MFYS…VMLL), 380–400 (FAFV…AVGF), 414–434 (GLTW…FYYL), and 466–486 (VAVL…LNAI).

This sequence belongs to the complex I subunit 2 family. As to quaternary structure, NDH-1 is composed of 14 different subunits. Subunits NuoA, H, J, K, L, M, N constitute the membrane sector of the complex.

It localises to the cell inner membrane. The catalysed reaction is a quinone + NADH + 5 H(+)(in) = a quinol + NAD(+) + 4 H(+)(out). NDH-1 shuttles electrons from NADH, via FMN and iron-sulfur (Fe-S) centers, to quinones in the respiratory chain. The immediate electron acceptor for the enzyme in this species is believed to be ubiquinone. Couples the redox reaction to proton translocation (for every two electrons transferred, four hydrogen ions are translocated across the cytoplasmic membrane), and thus conserves the redox energy in a proton gradient. In Paraburkholderia phymatum (strain DSM 17167 / CIP 108236 / LMG 21445 / STM815) (Burkholderia phymatum), this protein is NADH-quinone oxidoreductase subunit N.